A 286-amino-acid chain; its full sequence is MKTRDMNRDWIATAETLSSALPYLQRYDDAIVVIKLGGHAMGSDEGMESFARDVVLLRQVGVNPVIVHGGGPMINALLDKLQIKSEFVNGKRVTDAATMEVVEMVLSGMVNKRIVQAINAQGGKGIGLSGKDANLITCEATDPALGFVGTPSEVNADMLKNLFEKEFIPVIAPIGSGTAGETFNINGDTAAGAVAAALKADRLLLLTDVAGVKNAEGVVVTELKAADVEEMTAAGVIAGGMIPKTETALAAVRGGVRACTIVDGRVPNAVLLELFTDHGAGSMIRS.

Substrate is bound by residues 70-71 (GG), arginine 92, and asparagine 184.

This sequence belongs to the acetylglutamate kinase family. ArgB subfamily.

It is found in the cytoplasm. It catalyses the reaction N-acetyl-L-glutamate + ATP = N-acetyl-L-glutamyl 5-phosphate + ADP. It participates in amino-acid biosynthesis; L-arginine biosynthesis; N(2)-acetyl-L-ornithine from L-glutamate: step 2/4. Functionally, catalyzes the ATP-dependent phosphorylation of N-acetyl-L-glutamate. The chain is Acetylglutamate kinase from Ruegeria sp. (strain TM1040) (Silicibacter sp.).